The following is a 51-amino-acid chain: Lantibiotic flavucin (51 aa).

A propeptide spanning residues 1-20 (MSDFTLDFAEGDAADTVSPQ) is cleaved from the precursor. A cross-link (lanthionine (Ser-Cys)) is located at residues 23-27 (SKSLC). Cross-links (beta-methyllanthionine (Thr-Cys)) lie at residues 28–31 (TPGC), 33–38 (TGWMMC), and 42–45 (TKGC).

This sequence belongs to the type A lantibiotic family. In terms of processing, maturation of lantibiotics involves the enzymatic conversion of Thr, and Ser into dehydrated AA and the formation of thioether bonds with cysteine. This is followed by membrane translocation and cleavage of the modified precursor.

With respect to regulation, antimicrobial activity depends on the dehydration degree and integrity of flavucin. Lanthionine-containing peptide antibiotic (lantibiotic) active on certain Gram-positive bacteria. The bactericidal activity of lantibiotics is based on depolarization of energized bacterial cytoplasmic membranes, initiated by the formation of aqueous transmembrane pores. Flavucin has high antimicrobial activity against several pathogenic bacteria such as S.aureus, E.faecalis, E.faecium and L.monocytogenes. Is also active against the Gram-negative P.aeruginosa. The protein is Lantibiotic flavucin of Corynebacterium lipophiloflavum (strain ATCC 700352 / DSM 44291 / CCUG 37336 / JCM 10383 / DMMZ 1944).